The sequence spans 490 residues: AP-5 complex subunit mu-1 (490 aa).

The MHD domain occupies Lys-206–Asn-476.

The protein belongs to the adaptor complexes medium subunit family. Probably part of the adaptor protein complex 5 (AP-5) a tetramer composed of AP5B1, AP5M1, AP5S1 and AP5Z1. Widely expressed, including in small intestine and testis. In small intestine, highly expressed in cytoplasm of villi epithelial cells and internal glands. In testis, selectively expressed in maturing sperm cells (at protein level).

Its subcellular location is the cytoplasm. The protein resides in the cytosol. It localises to the late endosome membrane. The protein localises to the lysosome membrane. In terms of biological role, as part of AP-5, a probable fifth adaptor protein complex it may be involved in endosomal transport. The protein is AP-5 complex subunit mu-1 (Ap5m1) of Mus musculus (Mouse).